Here is a 208-residue protein sequence, read N- to C-terminus: MKKIFAIAALSLPLFSHFPAFAGASDELKVKLTEISSLKANFNQTVTDINDKVIQTGEGVFALSHPNQFYWHLTAPDESLIVADGTDVWIYNPFAEEVSVMDLNQAINASPIALLVHSDDETWSQYNVSQKENCFDISPKDKDSGGSEVQVCFNDNQLTKMVLKDQQGNISDFTLTNQSVIAGKDQDLFKFVVPDDVDIDDQRLKSTN.

Residues methionine 1–alanine 22 form the signal peptide.

Belongs to the LolA family. As to quaternary structure, monomer.

The protein localises to the periplasm. Participates in the translocation of lipoproteins from the inner membrane to the outer membrane. Only forms a complex with a lipoprotein if the residue after the N-terminal Cys is not an aspartate (The Asp acts as a targeting signal to indicate that the lipoprotein should stay in the inner membrane). The polypeptide is Outer-membrane lipoprotein carrier protein (Shewanella halifaxensis (strain HAW-EB4)).